Consider the following 495-residue polypeptide: Aspartyl/glutamyl-tRNA(Asn/Gln) amidotransferase subunit B (495 aa).

Belongs to the GatB/GatE family. GatB subfamily. Heterotrimer of A, B and C subunits.

The catalysed reaction is L-glutamyl-tRNA(Gln) + L-glutamine + ATP + H2O = L-glutaminyl-tRNA(Gln) + L-glutamate + ADP + phosphate + H(+). The enzyme catalyses L-aspartyl-tRNA(Asn) + L-glutamine + ATP + H2O = L-asparaginyl-tRNA(Asn) + L-glutamate + ADP + phosphate + 2 H(+). Allows the formation of correctly charged Asn-tRNA(Asn) or Gln-tRNA(Gln) through the transamidation of misacylated Asp-tRNA(Asn) or Glu-tRNA(Gln) in organisms which lack either or both of asparaginyl-tRNA or glutaminyl-tRNA synthetases. The reaction takes place in the presence of glutamine and ATP through an activated phospho-Asp-tRNA(Asn) or phospho-Glu-tRNA(Gln). This Methylocella silvestris (strain DSM 15510 / CIP 108128 / LMG 27833 / NCIMB 13906 / BL2) protein is Aspartyl/glutamyl-tRNA(Asn/Gln) amidotransferase subunit B.